We begin with the raw amino-acid sequence, 428 residues long: Cytochrome c biogenesis protein CcsB (428 aa).

3 helical membrane passes run 14–34, 72–92, and 162–182; these read LRFAISLIIFIAITSGIGTFI, SIWFLFTLILLCISLSACSFR, and IGPLVVHIGLIVLLLGSAYGS.

This sequence belongs to the Ccs1/CcsB family. In terms of assembly, may interact with CcsA.

The protein resides in the cellular thylakoid membrane. Required during biogenesis of c-type cytochromes (cytochrome c6 and cytochrome f) at the step of heme attachment. The polypeptide is Cytochrome c biogenesis protein CcsB (Prochlorococcus marinus (strain MIT 9312)).